A 421-amino-acid polypeptide reads, in one-letter code: D-amino acid dehydrogenase (421 aa).

FAD is bound at residue 3–17 (VIVLGSGVIGVASAY).

The protein belongs to the DadA oxidoreductase family. FAD is required as a cofactor.

The enzyme catalyses a D-alpha-amino acid + A + H2O = a 2-oxocarboxylate + AH2 + NH4(+). It functions in the pathway amino-acid degradation; D-alanine degradation; NH(3) and pyruvate from D-alanine: step 1/1. Oxidative deamination of D-amino acids. In Acinetobacter baumannii (strain ATCC 17978 / DSM 105126 / CIP 53.77 / LMG 1025 / NCDC KC755 / 5377), this protein is D-amino acid dehydrogenase.